A 371-amino-acid chain; its full sequence is Putative HAD-like hydrolase Noc_2718 (371 aa).

The tract at residues 1 to 288 is HAD-like hydrolase; sequence MKQKILLCSD…TGREESAEEE (288 aa). A YcgL domain is found at 291–371; it reads QSCAIYRSCK…QLSSREYRRS (81 aa).

The protein in the N-terminal section; belongs to the HAD-like hydrolase superfamily.

In Nitrosococcus oceani (strain ATCC 19707 / BCRC 17464 / JCM 30415 / NCIMB 11848 / C-107), this protein is Putative HAD-like hydrolase Noc_2718.